We begin with the raw amino-acid sequence, 138 residues long: SMVLGYWDIRRMLLEFTDTSYEEKRYICGEAPDYDRSQWLDVKFKLDLDFPNLPYLMDGKNKITQSNAILRIRVDIMENQIMDFRQFSLFLGKKLTFVDFLTYDVLDQNRMFEPKCLDEFPNLKAFMCRCFKMPINNK.

The residue at position 1 (S1) is a Phosphoserine. Residues 1 to 71 form the GST N-terminal domain; that stretch reads SMVLGYWDIR…KITQSNAILR (71 aa). Glutathione contacts are provided by residues 6–7, 39–43, 52–53, and 65–66; these read YW, WLDVK, NL, and QS. The GST C-terminal domain maps to 72 to 135; that stretch reads IRVDIMENQI…FMCRCFKMPI (64 aa).

The protein belongs to the GST superfamily. Mu family. Homodimer.

It is found in the cytoplasm. The enzyme catalyses RX + glutathione = an S-substituted glutathione + a halide anion + H(+). Functionally, conjugation of reduced glutathione to a wide number of exogenous and endogenous hydrophobic electrophiles. This is Glutathione S-transferase Mu 5 from Mesocricetus auratus (Golden hamster).